The primary structure comprises 148 residues: SsrA-binding protein (148 aa).

Belongs to the SmpB family.

It is found in the cytoplasm. Required for rescue of stalled ribosomes mediated by trans-translation. Binds to transfer-messenger RNA (tmRNA), required for stable association of tmRNA with ribosomes. tmRNA and SmpB together mimic tRNA shape, replacing the anticodon stem-loop with SmpB. tmRNA is encoded by the ssrA gene; the 2 termini fold to resemble tRNA(Ala) and it encodes a 'tag peptide', a short internal open reading frame. During trans-translation Ala-aminoacylated tmRNA acts like a tRNA, entering the A-site of stalled ribosomes, displacing the stalled mRNA. The ribosome then switches to translate the ORF on the tmRNA; the nascent peptide is terminated with the 'tag peptide' encoded by the tmRNA and targeted for degradation. The ribosome is freed to recommence translation, which seems to be the essential function of trans-translation. The chain is SsrA-binding protein from Ehrlichia ruminantium (strain Gardel).